A 393-amino-acid chain; its full sequence is Formate-dependent phosphoribosylglycinamide formyltransferase (393 aa).

N(1)-(5-phospho-beta-D-ribosyl)glycinamide contacts are provided by residues 22–23 (EL) and Glu-82. ATP contacts are provided by residues Arg-114, Lys-155, 160 to 165 (SSGHGQ), 195 to 198 (EGFV), and Glu-203. The region spanning 119–308 (RLAAEELGLP…EFALHARAIL (190 aa)) is the ATP-grasp domain. Positions 267 and 279 each coordinate Mg(2+). Residues Asp-286, Lys-356, and 363–364 (RR) each bind N(1)-(5-phospho-beta-D-ribosyl)glycinamide.

It belongs to the PurK/PurT family. As to quaternary structure, homodimer.

It carries out the reaction N(1)-(5-phospho-beta-D-ribosyl)glycinamide + formate + ATP = N(2)-formyl-N(1)-(5-phospho-beta-D-ribosyl)glycinamide + ADP + phosphate + H(+). It functions in the pathway purine metabolism; IMP biosynthesis via de novo pathway; N(2)-formyl-N(1)-(5-phospho-D-ribosyl)glycinamide from N(1)-(5-phospho-D-ribosyl)glycinamide (formate route): step 1/1. Involved in the de novo purine biosynthesis. Catalyzes the transfer of formate to 5-phospho-ribosyl-glycinamide (GAR), producing 5-phospho-ribosyl-N-formylglycinamide (FGAR). Formate is provided by PurU via hydrolysis of 10-formyl-tetrahydrofolate. The polypeptide is Formate-dependent phosphoribosylglycinamide formyltransferase (Pasteurella multocida (strain Pm70)).